Here is a 423-residue protein sequence, read N- to C-terminus: ER-bound oxygenase mpaB' (423 aa).

The Lumenal segment spans residues 1-22; sequence MSLSLPPALSELARALPYSRTQ. The helical transmembrane segment at 23–41 threads the bilayer; sequence WLPILVGFLIGYPLLIKAL. Over 42-423 the chain is Cytoplasmic; sequence RYKRLGEMKK…ISRTGKCPFH (382 aa).

It belongs to the mpaB oxygenase family.

Its subcellular location is the endoplasmic reticulum membrane. It carries out the reaction 4-farnesyl-3,5-dihydroxy-6-methylphthalide + AH2 + 2 O2 = (4E,8E)-10-(4,6-dihydroxy-7-methyl-3-oxo-1,3-dihydro-2-benzofuran-5-yl)-4,8-dimethyldeca-4,8-dienoate + acetone + A + H2O + H(+). It participates in secondary metabolite biosynthesis; terpenoid biosynthesis. In terms of biological role, ER-bound oxygenase; part of the gene cluster that mediates the biosynthesis of mycophenolic acid (MPA), the first isolated antibiotic natural product in the world obtained from a culture of Penicillium brevicompactum in 1893. MpaB' catalyzes the oxidative cleavage the C19-C20 double bond in farnesyl-DHMP (FDHMP) to yield FDHMP-3C via a mycophenolic aldehyde intermediate. The first step of the pathway is the synthesis of 5-methylorsellinic acid (5MOA) by the cytosolic polyketide synthase mpaC. 5MOA is then converted to the phthalide compound 5,7-dihydroxy-4,6-dimethylphthalide (DHMP) by the endoplasmic reticulum-bound cytochrome P450 monooxygenase mpaDE. MpaDE first catalyzes hydroxylation of 5-MOA to 4,6-dihydroxy-2-(hydroxymethyl)-3-methylbenzoic acid (DHMB). MpaDE then acts as a lactone synthase that catalyzes the ring closure to convert DHMB into DHMP. The next step is the prenylation of DHMP by the Golgi apparatus-associated prenyltransferase mpaA to yield farnesyl-DHMP (FDHMP). The ER-bound oxygenase mpaB then mediates the oxidative cleavage the C19-C20 double bond in FDHMP to yield FDHMP-3C via a mycophenolic aldehyde intermediate. The O-methyltransferase mpaG catalyzes the methylation of FDHMP-3C to yield MFDHMP-3C. After the cytosolic methylation of FDHMP-3C, MFDHMP-3C enters into peroxisomes probably via free diffusion due to its low molecular weight. Upon a peroxisomal CoA ligation reaction, catalyzed by a beta-oxidation component enzyme acyl-CoA ligase ACL891, MFDHMP-3C-CoA would then be restricted to peroxisomes for the following beta-oxidation pathway steps. The peroxisomal beta-oxidation machinery than converts MFDHMP-3C-CoA into MPA_CoA, via a beta-oxidation chain-shortening process. Finally mpaH acts as a peroxisomal acyl-CoA hydrolase with high substrate specificity toward MPA-CoA to release the final product MPA. The polypeptide is ER-bound oxygenase mpaB' (Penicillium brevicompactum).